The primary structure comprises 64 residues: Large ribosomal subunit protein bL35 (64 aa).

Residues 1–15 show a composition bias toward basic residues; sequence MPKNKTHSGTAKRFR. The interval 1 to 27 is disordered; that stretch reads MPKNKTHSGTAKRFRVTGSGKLRREQA.

Belongs to the bacterial ribosomal protein bL35 family.

This chain is Large ribosomal subunit protein bL35, found in Saccharopolyspora erythraea (strain ATCC 11635 / DSM 40517 / JCM 4748 / NBRC 13426 / NCIMB 8594 / NRRL 2338).